Reading from the N-terminus, the 587-residue chain is Bifunctional lycopene cyclase/phytoene synthase (587 aa).

Residues 1–242 (MGYDYALVHV…IVFGIAAFDK (242 aa)) form a lycopene beta-cyclase region. The next 7 helical transmembrane spans lie at 8 to 28 (VHVKYTIPLAALLTVFSYPVF), 35 to 55 (RTLFIVTIAFVATIPWDSYLI), 77 to 97 (AEELFFFIIQTYITAQLYIIL), 120 to 140 (GKLVGQLALSGSVLLGTWLIA), 150 to 170 (LILVWACTFALFTWTITAHFL), 172 to 192 (ALPLACTALPILLPTVYLWIV), and 220 to 240 (IEEATFFLVTNMLIVFGIAAF). The interval 249–587 (AFPEKFDKPA…WVAWSTLMAA (339 aa)) is phytoene synthase.

It in the N-terminal section; belongs to the lycopene beta-cyclase family. In the C-terminal section; belongs to the phytoene/squalene synthase family.

Its subcellular location is the membrane. It catalyses the reaction all-trans-lycopene = gamma-carotene. The enzyme catalyses gamma-carotene = all-trans-beta-carotene. The catalysed reaction is 2 (2E,6E,10E)-geranylgeranyl diphosphate = 15-cis-phytoene + 2 diphosphate. It functions in the pathway carotenoid biosynthesis; beta-carotene biosynthesis. It participates in carotenoid biosynthesis; phytoene biosynthesis; all-trans-phytoene from geranylgeranyl diphosphate: step 1/1. Its function is as follows. Bifunctional enzyme that catalyzes the reactions from geranylgeranyl diphosphate to phytoene (phytoene synthase) and lycopene to beta-carotene via the intermediate gamma-carotene (lycopene cyclase). This chain is Bifunctional lycopene cyclase/phytoene synthase, found in Colletotrichum graminicola (strain M1.001 / M2 / FGSC 10212) (Maize anthracnose fungus).